A 358-amino-acid polypeptide reads, in one-letter code: Trace amine-associated receptor 7d (358 aa).

The Extracellular segment spans residues 1 to 47 (MATGDDSFPWDQDSILSRDLFSATSTELCYENLNRSCVRSPYSPGPR). Asparagine 34 carries N-linked (GlcNAc...) asparagine glycosylation. Intrachain disulfides connect cysteine 37/cysteine 201 and cysteine 120/cysteine 205. Residues 48–68 (LILYAVFGFGAVLAVCGNLLV) traverse the membrane as a helical segment. Residues 69-83 (MTSILHFRQLHSPAN) are Cytoplasmic-facing. The chain crosses the membrane as a helical span at residues 84–104 (FLVASLACADFLVGVMVMPFS). Residues 105–121 (MVRSVEGCWYFGESYCK) lie on the Extracellular side of the membrane. Residues 122 to 143 (FHSCFEGSFCYSSLFHLCFISV) form a helical membrane-spanning segment. At 144-166 (DRYIAVSDPLTYPTRFTASVSGK) the chain is on the cytoplasmic side. Residues 167–187 (CITFSWLLSIIYSFSLLYTGA) traverse the membrane as a helical segment. At 188 to 212 (NDAGLEDLVSALTCVGGCQIAVNQT) the chain is on the extracellular side. A glycan (N-linked (GlcNAc...) asparagine) is linked at asparagine 210. The helical transmembrane segment at 213 to 233 (WVFINFLLFLIPTLVMITVYS) threads the bilayer. The Cytoplasmic segment spans residues 234–274 (KIFLIAKQQAQNIEKMSKQTARASESYKDRVTKRERKAAKT). A helical transmembrane segment spans residues 275 to 295 (LGIAVAAFLLSWLPYFIDSII). The Extracellular portion of the chain corresponds to 296–309 (DAFLGFITPTYVYE). A helical membrane pass occupies residues 310 to 333 (ILVWIVYYNSAMNPLIYAFFYSWF). Topologically, residues 334-358 (RKAIKLIVSGKILRENSSTTNLFPE) are cytoplasmic.

The protein belongs to the G-protein coupled receptor 1 family. In terms of tissue distribution, specifically expressed in neurons of the olfactory epithelium.

The protein localises to the cell membrane. Olfactory receptor specific for trace amines, such as beta-phenylethylamine (beta-PEA). Trace amine compounds are enriched in animal body fluids and act on trace amine-associated receptors (TAARs) to elicit both intraspecific and interspecific innate behaviors. Ligand-binding causes a conformation change that triggers signaling via G(s)-class of G alpha proteins (GNAL or GNAS). This is Trace amine-associated receptor 7d from Mus musculus (Mouse).